Reading from the N-terminus, the 185-residue chain is uncharacterized protein (185 aa).

3 helical membrane-spanning segments follow: residues 32-52 (LIFV…LLAF), 66-86 (LVTL…VLAV), and 155-175 (IGYG…FLVV).

The protein localises to the cell membrane. This is an uncharacterized protein from Bacillus subtilis (strain 168).